Reading from the N-terminus, the 557-residue chain is DNA mismatch repair protein MutL (557 aa).

The protein belongs to the DNA mismatch repair MutL/HexB family.

Its function is as follows. This protein is involved in the repair of mismatches in DNA. It is required for dam-dependent methyl-directed DNA mismatch repair. May act as a 'molecular matchmaker', a protein that promotes the formation of a stable complex between two or more DNA-binding proteins in an ATP-dependent manner without itself being part of a final effector complex. The chain is DNA mismatch repair protein MutL from Methanothrix thermoacetophila (strain DSM 6194 / JCM 14653 / NBRC 101360 / PT) (Methanosaeta thermophila).